A 173-amino-acid chain; its full sequence is Alpha-crystallin B chain (173 aa).

M1 is subject to N-acetylmethionine. Positions 54-162 (RLPSWIESGL…PERSIPITRE (109 aa)) constitute a sHSP domain. H81, H102, E104, and H109 together coordinate Zn(2+).

The protein belongs to the small heat shock protein (HSP20) family. Heteromer composed of three CRYAA and one CRYAB subunits. Aggregates with homologous proteins, including the small heat shock protein HSPB1, to form large heteromeric complexes. Inter-subunit bridging via zinc ions enhances stability, which is crucial as there is no protein turn over in the lens.

In terms of biological role, may contribute to the transparency and refractive index of the lens. This Aquarana catesbeiana (American bullfrog) protein is Alpha-crystallin B chain (CRYAB).